Consider the following 1121-residue polypeptide: MDALEDYVWPRATSELILLPVTGLECVGDRLLAGEGPDVLVYSLDFGGHLRMIKRVQNLLGHYLIHGFRVRPEPNGDLDLEAMVAVFGSKGLRVVKISWGQGHFWELWRSGLWNMSDWIWDARWLEGNIALALGHNSVVLYDPVVGCILQEVPCTDRCTLSSACLIGDAWKELTIVAGAVSNQLLVWYPATALADNKPVAPDRRISGHVGIIFSMSYLESKGLLATASEDRSVRIWKVGDLRVPGGRVQNIGHCFGHSARVWQVKLLENYLISAGEDCVCLVWSHEGEILQAFRGHQGRGIRAIAAHERQAWVITGGDDSGIRLWHLVGRGYRGLGVSALCFKSRSRPGTLKAVTLAGSWRLLAVTDTGALYLYDVEVKCWEQLLEDKHFQSYCLLEAAPGPEGFGLCAMANGEGRVKVVPINTPTAAVDQTLFPGKVHSLSWALRGYEELLLLASGPGGVVACLEISAAPSGKAIFVKERCRYLLPPSKQRWHTCSAFLPPGDFLVCGDRRGSVLLFPSRPGLLKDPGVGGKARAGAGAPVVGSGSSGGGNAFTGLGPVSTLPSLHGKQGVTSVTCHGGYVYTTGRDGAYYQLFVRDGQLQPVLRQKSCRGMNWLAGLRIVPDGSMVILGFHANEFVVWNPRSHEKLHIVNCGGGHRSWAFSDTEAAMAFAYLKDGDVMLYRALGGCTRPHVILREGLHGREITCVKRVGTITLGPEYGVPSFMQPDDLEPGSEGPDLTDIVITCSEDTTVCVLALPTTTGSAHALTAVCNHISSVRAVAVWGIGTPGGPQDPQPGLTAHVVSAGGRAEMHCFSIMVTPDPSTPSRLACHVMHLSSHRLDEYWDRQRNRHRMVKVDPETRYMSLAVCELDQPGLGPLVAAACSDGAVRLFLLQDSGRILQLLAETFHHKRCVLKVHSFTHEAPNQRRRLLLCSAATDGSLAFWDLTTMLDHDSTVLEPPVDPGLPYRLGTPSLTLQAHSCGINSLHTLPTREGHHLVASGSEDGSLHVFVLAVEMLQLEEAVGEAGLVPQLRVLEEYSVPCAHAAHVTGLKILSPSIMVSASIDQRLTFWRLGHGEPTFMNSTVFHVPDVADMDCWPVSPEFGHRCALGGQGLEVYNWYD.

M1 is subject to N-acetylmethionine. WD repeat units follow at residues 53–97, 105–143, 147–189, 200–238, 247–285, 289–327, 335–376, 381–422, 425–470, 476–520, 559–598, 604–642, 645–684, 739–785, 848–893, 901–946, 970–1012, 1036–1073, and 1079–1121; these read IKRV…VVKI, WELW…LYDP, CILQ…VWYP, APDR…IWKV, RVQN…VWSH, ILQA…LWHL, LGVS…LYDV, WEQL…VVPI, PTAA…ISAA, IFVK…LFPS, PVST…FVRD, VLRQ…VWNP, HEKL…LYRA, LTDI…VWGI, RNRH…LFLL, QLLA…FWDL, GTPS…VFVL, EEYS…FWRL, and TFMN…NWYD.

Belongs to the WD repeat WDR6 family. As to quaternary structure, interacts with FTSJ1; the interaction is direct, and required for 2'-O-methylation of position 34 in substrate tRNAs. Interacts with IRS4. Interacts with STK11/LKB1. As to expression, ubiquitous.

The protein resides in the cytoplasm. Functionally, together with methyltransferase FTSJ1, methylates the 2'-O-ribose of nucleotides at position 34 of the tRNA anticodon loop of substrate tRNAs. Required for the correct positioning of the substrate tRNA for methylation. Required to suppress amino acid starvation-induced autophagy. Enhances the STK11/LKB1-induced cell growth suppression activity. This is tRNA (34-2'-O)-methyltransferase regulator WDR6 (WDR6) from Homo sapiens (Human).